The primary structure comprises 579 residues: UvrABC system protein C (579 aa).

A GIY-YIG domain is found at 12–89 (DATGVYIFRD…IKRYRPPYNV (78 aa)). One can recognise a UVR domain in the interval 193-228 (QEVIEVLEEEMKEASERLEFERAARIRDQIESIREV).

Belongs to the UvrC family. In terms of assembly, interacts with UvrB in an incision complex.

The protein resides in the cytoplasm. The UvrABC repair system catalyzes the recognition and processing of DNA lesions. UvrC both incises the 5' and 3' sides of the lesion. The N-terminal half is responsible for the 3' incision and the C-terminal half is responsible for the 5' incision. The protein is UvrABC system protein C of Methanothermobacter thermautotrophicus (strain ATCC 29096 / DSM 1053 / JCM 10044 / NBRC 100330 / Delta H) (Methanobacterium thermoautotrophicum).